A 153-amino-acid polypeptide reads, in one-letter code: Transcriptional repressor NrdR (153 aa).

The segment at 3-34 is a zinc-finger region; it reads CPYCNADDTKVIDSRLAAEGAQVRRRRQCNQC. An ATP-cone domain is found at 49-139; sequence PRIIKSNGRI…VYRDFQDIEA (91 aa).

It belongs to the NrdR family. The cofactor is Zn(2+).

Negatively regulates transcription of bacterial ribonucleotide reductase nrd genes and operons by binding to NrdR-boxes. The sequence is that of Transcriptional repressor NrdR from Psychrobacter sp. (strain PRwf-1).